A 978-amino-acid polypeptide reads, in one-letter code: Copper-transporting ATPase HMA4 (978 aa).

Basic and acidic residues predominate over residues 1 to 11 (MEQNGENHLKD). The tract at residues 1–35 (MEQNGENHLKDPLLQADGGGSGASPAGASPRKERK) is disordered. HMA domains are found at residues 37–103 (RKVM…FEVD), 111–177 (AVCR…FGAD), and 186–252 (NKVH…QPPK). Positions 48, 51, 122, and 125 each coordinate Cu(+). 8 consecutive transmembrane segments (helical) span residues 280-300 (FLWS…LPMI), 315-335 (MTIG…IIGW), 352-372 (MDVL…YIVL), 385-405 (FFET…LEVV), 545-565 (FFVP…FVAG), 584-604 (LALQ…LGLA), 907-927 (VWAL…LFPF), and 935-955 (WLAG…SLLL).

This sequence belongs to the cation transport ATPase (P-type) (TC 3.A.3) family. Type IB subfamily. Highly expressed in roots. Expressed in vascular tissues of the stele, mainly in pericycle cells.

The protein localises to the vacuole membrane. The enzyme catalyses Cu(+)(in) + ATP + H2O = Cu(+)(out) + ADP + phosphate + H(+). Its function is as follows. Copper (Cu) transporter that mediates Cu transport in root vacuoles. Involved in Cu detoxification by sequestrating Cu into root vacuoles and limiting translocation of Cu from the roots to the shoots, and accumulation in grains. The sequence is that of Copper-transporting ATPase HMA4 from Oryza sativa subsp. japonica (Rice).